The sequence spans 748 residues: Junctophilin-3 (748 aa).

The Cytoplasmic segment spans residues 1-727 (MSSGGRFNFD…LKSSTGSAPI (727 aa)). MORN repeat units lie at residues 15-37 (YCGGWEDGKAHGHGVCTGPKGQG), 39-60 (YTGSWSHGFEVLGVYTWPSGNT), 61-82 (YQGTWAQGKRHGIGLESKGKWV), 83-105 (YKGEWTHGFKGRYGVRECAGNGA), 107-129 (YEGTWSNGLQDGYGTETYSDGGT), and 130-152 (YQGQWVGGMRQGYGVRQSVPYGM). The tract at residues 230-259 (SKSSLASQRSKQSSFRSEAGMSTVSSTASD) is disordered. Residues 231–244 (KSSLASQRSKQSSF) are compositionally biased toward low complexity. A compositionally biased stretch (polar residues) spans 249–259 (GMSTVSSTASD). MORN repeat units follow at residues 288–310 (YVGEWKNDKRSGFGVSQRSDGLK) and 311–333 (YEGEWASNRRHGYGCMTFPDGTK). Residues 416–496 (AKEFSPSFQH…TPPPAPAARN (81 aa)) are disordered. S440 carries the phosphoserine modification. The span at 448-457 (STGTPLQQES) shows a compositional bias: polar residues. T451 carries the phosphothreonine modification. Residue S457 is modified to Phosphoserine. T471 is modified (phosphothreonine). Phosphoserine occurs at positions 475 and 506. Disordered stretches follow at residues 526-597 (CARS…SPGG) and 624-649 (HPQKRRYSKGGACRGLGDDHRPEDRG). Over residues 639 to 649 (LGDDHRPEDRG) the composition is skewed to basic and acidic residues. Phosphoserine occurs at positions 703 and 710. Residues 728-748 (LVVMVILLNIGVAILFINFFI) traverse the membrane as a helical; Anchor for type IV membrane protein segment.

It belongs to the junctophilin family. In terms of tissue distribution, specifically expressed in brain.

The protein resides in the cell membrane. It localises to the endoplasmic reticulum membrane. Its function is as follows. Junctophilins contribute to the formation of junctional membrane complexes (JMCs) which link the plasma membrane with the endoplasmic or sarcoplasmic reticulum in excitable cells. Provides a structural foundation for functional cross-talk between the cell surface and intracellular calcium release channels. JPH3 is brain-specific and appears to have an active role in certain neurons involved in motor coordination and memory. The chain is Junctophilin-3 (JPH3) from Homo sapiens (Human).